Consider the following 588-residue polypeptide: Ribonuclease Y (588 aa).

Residues 7 to 27 (VLLVAVLLLTVVVVGAVLVGV) traverse the membrane as a helical segment. In terms of domain architecture, KH spans 278-359 (VVSVLHLPGD…HRIEEVHDLA (82 aa)). The region spanning 404-497 (VLKHLVESAH…TQASDACSGG (94 aa)) is the HD domain.

It belongs to the RNase Y family.

It is found in the cell membrane. Its function is as follows. Endoribonuclease that initiates mRNA decay. This is Ribonuclease Y from Salinispora tropica (strain ATCC BAA-916 / DSM 44818 / JCM 13857 / NBRC 105044 / CNB-440).